A 517-amino-acid polypeptide reads, in one-letter code: Intermediate filament family orphan 2 (517 aa).

Positions Asn53–Asn484 constitute an IF rod domain. 3 disordered regions span residues Glu104–Ala129, Lys330–Asp349, and Lys478–Ser517. The segment covering Ser485–Gly497 has biased composition (low complexity). A compositionally biased stretch (acidic residues) spans Glu501–Ser517.

This sequence belongs to the intermediate filament family.

The protein is Intermediate filament family orphan 2 (IFFO2) of Homo sapiens (Human).